Reading from the N-terminus, the 368-residue chain is Probable leucine aminopeptidase TRV_05750 (368 aa).

The signal sequence occupies residues 1 to 18; the sequence is MKVFAIAAVAALTAVAVA. N-linked (GlcNAc...) asparagine glycosylation is present at N92. Positions 172 and 191 each coordinate Zn(2+). Residues N192 and N216 are each glycosylated (N-linked (GlcNAc...) asparagine). Residues E230 and D257 each contribute to the Zn(2+) site. Cysteines 301 and 305 form a disulfide. H334 serves as a coordination point for Zn(2+).

It belongs to the peptidase M28 family. M28E subfamily. In terms of assembly, monomer. Requires Zn(2+) as cofactor.

The protein resides in the secreted. Its function is as follows. Probable extracellular aminopeptidase which contributes to pathogenicity. The protein is Probable leucine aminopeptidase TRV_05750 of Trichophyton verrucosum (strain HKI 0517).